We begin with the raw amino-acid sequence, 270 residues long: MNNTIISMKEKELRFLKFFHQQKYNVVDFNLIEELDWQRLTHEDLQQMDERSFWQQNKSIYALRNDFTDQLFRYYSNYPTHFKKVAYAGDIIRDNRVIKQVGIENYEPQFDNITQNFLDFQYFIQNVLHDDIQFIILGHYQLIDALLEKNHQTREVMEMIEERNLSGLIQTLTFNHPIIQILKENTLNQLKILSHYLPERHPAMVAIQSWSQWFTDHGITEIHLDVTAQAPRSYYKGIFIKCHLKNTAHSVLTGGYYHGSLEGFGLGLTL.

This sequence belongs to the class-II aminoacyl-tRNA synthetase family. HisZ subfamily. Heteromultimer composed of HisG and HisZ subunits.

The protein localises to the cytoplasm. Its pathway is amino-acid biosynthesis; L-histidine biosynthesis; L-histidine from 5-phospho-alpha-D-ribose 1-diphosphate: step 1/9. Its function is as follows. Required for the first step of histidine biosynthesis. May allow the feedback regulation of ATP phosphoribosyltransferase activity by histidine. This Staphylococcus epidermidis (strain ATCC 35984 / DSM 28319 / BCRC 17069 / CCUG 31568 / BM 3577 / RP62A) protein is ATP phosphoribosyltransferase regulatory subunit (hisZ).